A 316-amino-acid polypeptide reads, in one-letter code: Ribosomal RNA small subunit methyltransferase H (316 aa).

Residues 35–37, aspartate 55, phenylalanine 84, aspartate 105, and glutamine 112 contribute to the S-adenosyl-L-methionine site; that span reads AGH.

It belongs to the methyltransferase superfamily. RsmH family.

The protein resides in the cytoplasm. It catalyses the reaction cytidine(1402) in 16S rRNA + S-adenosyl-L-methionine = N(4)-methylcytidine(1402) in 16S rRNA + S-adenosyl-L-homocysteine + H(+). Its function is as follows. Specifically methylates the N4 position of cytidine in position 1402 (C1402) of 16S rRNA. This chain is Ribosomal RNA small subunit methyltransferase H, found in Streptococcus sanguinis (strain SK36).